Reading from the N-terminus, the 496-residue chain is Iroquois-class homeodomain protein irx-4-A (496 aa).

Residues 141–203 constitute a DNA-binding region (homeobox; TALE-type); the sequence is GSSRRKNATR…NARRRLKKEN (63 aa). The disordered stretch occupies residues 203-246; the sequence is NKMTWPPRNKCSDEKRPYDEEEEEEEEEEDSQKATIKNEKKTVD. The segment covering 221–232 has biased composition (acidic residues); the sequence is DEEEEEEEEEED.

This sequence belongs to the TALE/IRO homeobox family. As to expression, expressed in the neural plate in overlapping patterns with other irx members, which all share an anterior border of expression. At stage 20, expressed in a subset of cells in the developing hindbrain with expression appearing above the otic vesicle by stage 26. Expression in retina cells begins at stage 28, continuing at later stages and is limited to a subset of retinal cells of the optic cup. Also expressed in the ventricle of the heart from stage 36 (late tailbud) onwards. Only expressed in the pronephros at tadpole stage.

It localises to the nucleus. Functionally, acts partially redundantly with other irx members in neural patterning. Required for formation of the posterior forebrain, midbrain, hindbrain, and to a lesser extent, spinal cord. Patterns the neuroectoderm in both the anterior/posterior and dorsal/ventral axes. Does not appear to play a role in pronephros kidney development. The protein is Iroquois-class homeodomain protein irx-4-A (irx4-a) of Xenopus laevis (African clawed frog).